Consider the following 2431-residue polypeptide: Reducing polyketide synthase rads1 (2431 aa).

The 431-residue stretch at 10–440 folds into the Ketosynthase family 3 (KS3) domain; the sequence is RAPIAIIGLA…GTNAHIVLER (431 aa). Residues Cys184, His319, and His363 each act as for beta-ketoacyl synthase activity in the active site. The tract at residues 558-895 is malonyl-CoA:ACP transacylase (MAT) domain; the sequence is FVFTGQGAQW…NLAAELFRRG (338 aa). An N-terminal hotdog fold region spans residues 944–1080; the sequence is KSILGAELPS…GLISIAYEDT (137 aa). In terms of domain architecture, PKS/mFAS DH spans 944-1267; it reads KSILGAELPS…LAELEVDDAA (324 aa). Residues 946–1264 are dehydratase (DH) domain; it reads ILGAELPSMD…DFRLAELEVD (319 aa). Catalysis depends on His976, which acts as the Proton acceptor; for dehydratase activity. The interval 1108 to 1267 is C-terminal hotdog fold; it reads PETCSKERFY…LAELEVDDAA (160 aa). Asp1174 serves as the catalytic Proton donor; for dehydratase activity. The enoyl reductase (ER) domain stretch occupies residues 1705–2023; that stretch reads GLLNTLHFVP…QGKHLGKMIL (319 aa). Cys1822 (phosphocysteine intermediate) is an active-site residue. The ketoreductase (KR) domain stretch occupies residues 2048 to 2228; it reads ATYLIVGGLG…VSVNLGIMRD (181 aa). Residues 2346–2423 enclose the Carrier domain; sequence VAAAIITEAL…TFAVQIAKKS (78 aa). Position 2383 is an O-(pantetheine 4'-phosphoryl)serine (Ser2383).

It participates in secondary metabolite biosynthesis. Reducing polyketide synthase; part of the gene cluster that mediates the biosynthesis of radicicol, a resorcylic acid lactone (RAL) that irreversibly inhibits the HSP90 molecular chaperone, an important target for cancer chemotherapy. The cluster encodes only two apparent post-PKS enzymes, a cytochrome P450 monooxygenase (radP) and a non-heme halogenase (radH) that introduce the epoxide and the chlorine, respectively. If this cluster includes all the genes required for radicicol biosynthesis, the remaining structural features of radicicol are presumably generated by the PKSs rads1 and rads2. The C-2' ketone could arise if the R-PKS rads1 and NR-PKS rads2 each carry out four iterations, in contrast to the five iteration-three iteration split for the hypothemycin PKSs. The origin of the cis 5',6' double bond is not known. The radicicol R-PKS radS1 ER domain may catalyze either double bond isomerization or reduction in the third iteration. This chain is Reducing polyketide synthase rads1, found in Floropilus chiversii (Chaetomium chiversii).